A 481-amino-acid polypeptide reads, in one-letter code: NADH-quinone oxidoreductase subunit N (481 aa).

14 helical membrane passes run 11 to 31, 38 to 58, 69 to 89, 107 to 127, 128 to 148, 162 to 182, 203 to 223, 237 to 257, 271 to 291, 299 to 319, 327 to 347, 370 to 390, 401 to 421, and 457 to 477; these read AIPE…DLFW, LAAV…VFEM, FVLD…VLMV, VFVL…GGSL, LSVY…VAFY, FVLG…LYGL, LVLV…LGAA, PTVV…ALII, WQQI…VIAI, MLAY…VAGT, FFYT…ILLV, YAFL…TVGF, VAAG…IGAF, and LALL…FYAM.

The protein belongs to the complex I subunit 2 family. As to quaternary structure, NDH-1 is composed of 14 different subunits. Subunits NuoA, H, J, K, L, M, N constitute the membrane sector of the complex.

The protein resides in the cell inner membrane. It carries out the reaction a quinone + NADH + 5 H(+)(in) = a quinol + NAD(+) + 4 H(+)(out). NDH-1 shuttles electrons from NADH, via FMN and iron-sulfur (Fe-S) centers, to quinones in the respiratory chain. The immediate electron acceptor for the enzyme in this species is believed to be ubiquinone. Couples the redox reaction to proton translocation (for every two electrons transferred, four hydrogen ions are translocated across the cytoplasmic membrane), and thus conserves the redox energy in a proton gradient. In Acidithiobacillus ferrooxidans (strain ATCC 23270 / DSM 14882 / CIP 104768 / NCIMB 8455) (Ferrobacillus ferrooxidans (strain ATCC 23270)), this protein is NADH-quinone oxidoreductase subunit N.